The sequence spans 277 residues: Tryptophan synthase alpha chain (277 aa).

Catalysis depends on proton acceptor residues Glu-42 and Glu-53.

It belongs to the TrpA family. In terms of assembly, tetramer of two alpha and two beta chains.

The enzyme catalyses (1S,2R)-1-C-(indol-3-yl)glycerol 3-phosphate + L-serine = D-glyceraldehyde 3-phosphate + L-tryptophan + H2O. The protein operates within amino-acid biosynthesis; L-tryptophan biosynthesis; L-tryptophan from chorismate: step 5/5. Its function is as follows. The alpha subunit is responsible for the aldol cleavage of indoleglycerol phosphate to indole and glyceraldehyde 3-phosphate. The polypeptide is Tryptophan synthase alpha chain (Natronomonas pharaonis (strain ATCC 35678 / DSM 2160 / CIP 103997 / JCM 8858 / NBRC 14720 / NCIMB 2260 / Gabara) (Halobacterium pharaonis)).